We begin with the raw amino-acid sequence, 250 residues long: MIILITNDDGFGSEGIKLLKEIARNFAPEIWIVAPDTDRSGAARSLDYPVKQSIGIKQHSEREFSVSGTPADCVIIALNKVMNKKPDLILSGVNIGSNVGDDICYSGTIGAVMEGAARSIPSIALSQVYHDKIDWHNTKVFAPKVIAKLVKVGWPKNIVMSVNFPATEKVKGVEFAEQGEYNIDGDLTFTENSNGSFSLNWSREHSGSGSINKIKEGFITITPVKLDFTDYDTLNTMKNSCADEFSSIAD.

The a divalent metal cation site is built by Asp-8, Asp-9, Ser-40, and Asn-94.

The protein belongs to the SurE nucleotidase family. It depends on a divalent metal cation as a cofactor.

It is found in the cytoplasm. The catalysed reaction is a ribonucleoside 5'-phosphate + H2O = a ribonucleoside + phosphate. Functionally, nucleotidase that shows phosphatase activity on nucleoside 5'-monophosphates. The sequence is that of 5'-nucleotidase SurE from Wolbachia sp. subsp. Drosophila simulans (strain wRi).